Consider the following 295-residue polypeptide: Nucleotide-binding protein RBAM_031990 (295 aa).

Residue 16 to 23 (GMSGAGKT) participates in ATP binding. A GTP-binding site is contributed by 67-70 (DLRG).

This sequence belongs to the RapZ-like family.

Its function is as follows. Displays ATPase and GTPase activities. The chain is Nucleotide-binding protein RBAM_031990 from Bacillus velezensis (strain DSM 23117 / BGSC 10A6 / LMG 26770 / FZB42) (Bacillus amyloliquefaciens subsp. plantarum).